A 386-amino-acid chain; its full sequence is Phosphoglycerate kinase (386 aa).

Residues 21–23 (DLN), Arg-36, 59–62 (HLGR), Arg-112, and Arg-145 contribute to the substrate site. ATP is bound by residues Lys-196, Glu-313, and 339–342 (GGDT).

This sequence belongs to the phosphoglycerate kinase family. Monomer.

The protein resides in the cytoplasm. It catalyses the reaction (2R)-3-phosphoglycerate + ATP = (2R)-3-phospho-glyceroyl phosphate + ADP. It functions in the pathway carbohydrate degradation; glycolysis; pyruvate from D-glyceraldehyde 3-phosphate: step 2/5. This chain is Phosphoglycerate kinase (pgk), found in Haemophilus influenzae (strain ATCC 51907 / DSM 11121 / KW20 / Rd).